A 238-amino-acid chain; its full sequence is Flagellar L-ring protein (238 aa).

A signal peptide spans 1-16; the sequence is MRKLILISLCIFFLAS. Cys-17 is lipidated: N-palmitoyl cysteine. The S-diacylglycerol cysteine moiety is linked to residue Cys-17.

Belongs to the FlgH family. As to quaternary structure, the basal body constitutes a major portion of the flagellar organelle and consists of four rings (L,P,S, and M) mounted on a central rod.

The protein localises to the cell outer membrane. It is found in the bacterial flagellum basal body. Its function is as follows. Assembles around the rod to form the L-ring and probably protects the motor/basal body from shearing forces during rotation. The sequence is that of Flagellar L-ring protein from Thermodesulfovibrio yellowstonii (strain ATCC 51303 / DSM 11347 / YP87).